The following is a 150-amino-acid chain: Large ribosomal subunit protein bL9 (150 aa).

Belongs to the bacterial ribosomal protein bL9 family.

Binds to the 23S rRNA. The sequence is that of Large ribosomal subunit protein bL9 from Streptococcus pyogenes serotype M5 (strain Manfredo).